We begin with the raw amino-acid sequence, 351 residues long: Photosystem II D2 protein (351 aa).

Residues T39–T59 traverse the membrane as a helical segment. H116 serves as a coordination point for chlorophyll a. A helical transmembrane segment spans residues G123 to P139. Q128 and N141 together coordinate pheophytin a. Residues V151 to S164 form a helical membrane-spanning segment. Chlorophyll a is bound at residue H196. A helical transmembrane segment spans residues G206–E226. Residues H213 and F260 each coordinate a plastoquinone. H213 contributes to the Fe cation binding site. Residue H267 participates in Fe cation binding. The chain crosses the membrane as a helical span at residues G277 to R293.

It belongs to the reaction center PufL/M/PsbA/D family. PSII is composed of 1 copy each of membrane proteins PsbA, PsbB, PsbC, PsbD, PsbE, PsbF, PsbH, PsbI, PsbJ, PsbK, PsbL, PsbM, PsbT, PsbX, PsbY, PsbZ, Psb30/Ycf12, peripheral proteins PsbO, CyanoQ (PsbQ), PsbU, PsbV and a large number of cofactors. It forms dimeric complexes. Requires The D1/D2 heterodimer binds P680, chlorophylls that are the primary electron donor of PSII, and subsequent electron acceptors. It shares a non-heme iron and each subunit binds pheophytin, quinone, additional chlorophylls, carotenoids and lipids. There is also a Cl(-1) ion associated with D1 and D2, which is required for oxygen evolution. The PSII complex binds additional chlorophylls, carotenoids and specific lipids. as cofactor.

It localises to the cellular thylakoid membrane. The catalysed reaction is 2 a plastoquinone + 4 hnu + 2 H2O = 2 a plastoquinol + O2. In terms of biological role, photosystem II (PSII) is a light-driven water:plastoquinone oxidoreductase that uses light energy to abstract electrons from H(2)O, generating O(2) and a proton gradient subsequently used for ATP formation. It consists of a core antenna complex that captures photons, and an electron transfer chain that converts photonic excitation into a charge separation. The D1/D2 (PsbA/PsbD) reaction center heterodimer binds P680, the primary electron donor of PSII as well as several subsequent electron acceptors. D2 is needed for assembly of a stable PSII complex. The sequence is that of Photosystem II D2 protein from Synechococcus sp. (strain WH7803).